Here is a 347-residue protein sequence, read N- to C-terminus: tRNA pseudouridine synthase D (347 aa).

D81 (nucleophile) is an active-site residue. The region spanning 158–304 (GVPNYFGNQR…MRHDRRAIAL (147 aa)) is the TRUD domain.

This sequence belongs to the pseudouridine synthase TruD family.

It carries out the reaction uridine(13) in tRNA = pseudouridine(13) in tRNA. Responsible for synthesis of pseudouridine from uracil-13 in transfer RNAs. The sequence is that of tRNA pseudouridine synthase D from Vibrio vulnificus (strain YJ016).